Reading from the N-terminus, the 326-residue chain is Protein-arginine N-acetylglucosaminyltransferase NleB2 (326 aa).

Residues 45-47, Y69, and 216-219 contribute to the UDP-N-acetyl-alpha-D-glucosamine site; these read QWF and YLDM. The DXD motif signature appears at 218 to 220; that stretch reads DMD. Position 220 (D220) interacts with Mn(2+). The active-site Proton acceptor is the E250. Mn(2+) contacts are provided by N317 and S319. Residues S319 and 324–326 contribute to the UDP-N-acetyl-alpha-D-glucosamine site; that span reads SSW.

Belongs to the glycosyltransferase NleB family. It depends on Mn(2+) as a cofactor.

The protein resides in the secreted. It is found in the host cell. The catalysed reaction is L-arginyl-[protein] + UDP-N-acetyl-alpha-D-glucosamine = N(omega)-(N-acetyl-beta-D-glucosaminyl)-L-arginyl-[protein] + UDP + H(+). Its function is as follows. Protein-arginine N-acetylglucosaminyltransferase effector that catalyzes the transfer of a single N-acetylglucosamine (GlcNAc) to a conserved arginine residue of host target proteins. In contrast to NleB1, not able to disrupt TNF signaling in infected cells. Shows a lower enzymatic activity than NleB1. This chain is Protein-arginine N-acetylglucosaminyltransferase NleB2, found in Escherichia coli O127:H6 (strain E2348/69 / EPEC).